A 575-amino-acid chain; its full sequence is uncharacterized protein (575 aa).

One can recognise an HTH marR-type domain in the interval 1 to 120; sequence MKLIEHYVAL…YNMWLSEVFG (120 aa). A DNA-binding region (H-T-H motif) is located at residues 26–49; it reads LTEIADCLFCTERNAKLILHKLEN. Residues 176–490 form a solute-binding region region; the sequence is EPKPHLVHGW…FGFLHLLLSE (315 aa).

The protein in the C-terminal section; belongs to the bacterial solute-binding protein 5 family.

This is an uncharacterized protein from Bacillus subtilis (strain 168).